A 398-amino-acid chain; its full sequence is Acetate kinase (398 aa).

Asn-10 is a binding site for Mg(2+). Lys-17 contributes to the ATP binding site. Arg-91 is a substrate binding site. Asp-148 functions as the Proton donor/acceptor in the catalytic mechanism. Residues 208-212 (HLGNG), 283-285 (DCR), and 331-335 (GIGEN) contribute to the ATP site. Glu-385 provides a ligand contact to Mg(2+).

This sequence belongs to the acetokinase family. Homodimer. It depends on Mg(2+) as a cofactor. Mn(2+) is required as a cofactor.

The protein localises to the cytoplasm. It catalyses the reaction acetate + ATP = acetyl phosphate + ADP. It functions in the pathway metabolic intermediate biosynthesis; acetyl-CoA biosynthesis; acetyl-CoA from acetate: step 1/2. Functionally, catalyzes the formation of acetyl phosphate from acetate and ATP. Can also catalyze the reverse reaction. The polypeptide is Acetate kinase (Shewanella woodyi (strain ATCC 51908 / MS32)).